The chain runs to 309 residues: MDKKQRKVVIVGDGSVGSSFAFSLVQNCALDELVIVDLVKTHAEGDVKDLEDVAAFTNATNIHTGEYADARDADIVVITAGVPRKPGESRLDLINRNTKILESIVKPVVASGFNGCFVISSNPVDILTSMTQRLSGFPRHRVIGTGTSLDTARLRVALAQKLNVATTAVDAAVLGEHGDSSIVNFDEIMINAQPLKTVTTVDDQFKAEIEQAVRGKGGQIISQKGATFYGVAVSLMQICRAILNDENAELIVSAALSGQYGINDLYLGSPAIINRNGLQKVIEAELSDDERARMQHFAAKMLTMMNVAS.

NAD(+)-binding positions include Val16, Asp37, Tyr67, and 81-82 (GV). Position 90 (Arg90) interacts with substrate. Ser103 is a binding site for NAD(+). 122-125 (NPVD) is a substrate binding site. Thr145 serves as a coordination point for NAD(+). 150-153 (DTAR) contributes to the substrate binding site. The active-site Proton acceptor is His177. Substrate is bound at residue Thr227.

It belongs to the LDH/MDH superfamily. LDH family. In terms of assembly, homotetramer.

The protein localises to the cytoplasm. It catalyses the reaction (S)-lactate + NAD(+) = pyruvate + NADH + H(+). Its pathway is fermentation; pyruvate fermentation to lactate; (S)-lactate from pyruvate: step 1/1. Its function is as follows. Catalyzes the conversion of lactate to pyruvate. In Lactiplantibacillus plantarum (strain ATCC BAA-793 / NCIMB 8826 / WCFS1) (Lactobacillus plantarum), this protein is L-lactate dehydrogenase 2.